A 575-amino-acid chain; its full sequence is Alpha-(1,6)-fucosyltransferase (575 aa).

The Cytoplasmic segment spans residues 1–9 (MRPWTGSWR). The chain crosses the membrane as a helical; Signal-anchor for type II membrane protein span at residues 10–30 (WIMLILFAWGTLLFYIGGHLV). At 31-575 (RDNDHPDHSS…KVPHVPEAEK (545 aa)) the chain is on the lumenal side. 3 cysteine pairs are disulfide-bonded: cysteine 204/cysteine 266, cysteine 212/cysteine 230, and cysteine 218/cysteine 222. Residues 206-493 (KAKKLVCNIN…PDASANFHSL (288 aa)) form the GT23 domain. Serine 278 bears the Phosphoserine mark. Positions 299 to 305 (PRPPYLP) match the SH3-binding motif. The tract at residues 365-366 (RR) is important for donor substrate binding. A disulfide bond links cysteine 465 and cysteine 472. In terms of domain architecture, SH3 spans 502-563 (QNAHNQIAIY…PSYKVREKIE (62 aa)).

It belongs to the glycosyltransferase 23 family. In terms of processing, tyrosine phosphorylated by PKDCC/VLK. In terms of tissue distribution, highest expression found in brain. Also found in heart, lung, spleen and kidney.

The protein localises to the golgi apparatus. The protein resides in the golgi stack membrane. The enzyme catalyses N(4)-{beta-D-GlcNAc-(1-&gt;2)-alpha-D-Man-(1-&gt;3)-[beta-D-GlcNAc-(1-&gt;2)-alpha-D-Man-(1-&gt;6)]-beta-D-Man-(1-&gt;4)-beta-D-GlcNAc-(1-&gt;4)-beta-D-GlcNAc}-L-asparaginyl-[protein] + GDP-beta-L-fucose = an N(4)-{beta-D-GlcNAc-(1-&gt;2)-alpha-D-Man-(1-&gt;3)-[beta-D-GlcNAc-(1-&gt;2)-alpha-D-Man-(1-&gt;6)]-beta-D-Man-(1-&gt;4)-beta-D-GlcNAc-(1-&gt;4)-[alpha-L-Fuc-(1-&gt;6)]-beta-D-GlcNAc}-L-asparaginyl-[protein] + GDP + H(+). It participates in protein modification; protein glycosylation. Functionally, catalyzes the addition of fucose in alpha 1-6 linkage to the first GlcNAc residue, next to the peptide chains in N-glycans. This chain is Alpha-(1,6)-fucosyltransferase (FUT8), found in Bos taurus (Bovine).